The chain runs to 258 residues: Global transcriptional regulator CodY (258 aa).

Residues Met-1–Leu-156 are GAF domain. The H-T-H motif DNA-binding region spans Ala-204–Arg-223.

It belongs to the CodY family.

It localises to the cytoplasm. In terms of biological role, DNA-binding global transcriptional regulator which is involved in the adaptive response to starvation and acts by directly or indirectly controlling the expression of numerous genes in response to nutrient availability. During rapid exponential growth, CodY is highly active and represses genes whose products allow adaptation to nutrient depletion. The chain is Global transcriptional regulator CodY from Clostridium perfringens (strain SM101 / Type A).